We begin with the raw amino-acid sequence, 571 residues long: Potassium-transporting ATPase potassium-binding subunit (571 aa).

10 helical membrane passes run L7–L27, T66–A86, G137–I157, F188–V208, I255–F275, W286–F306, V390–V410, T430–I450, I497–G517, and L538–A558.

The protein belongs to the KdpA family. In terms of assembly, the system is composed of three essential subunits: KdpA, KdpB and KdpC.

It is found in the cell membrane. Part of the high-affinity ATP-driven potassium transport (or Kdp) system, which catalyzes the hydrolysis of ATP coupled with the electrogenic transport of potassium into the cytoplasm. This subunit binds the extracellular potassium ions and delivers the ions to the membrane domain of KdpB through an intramembrane tunnel. The sequence is that of Potassium-transporting ATPase potassium-binding subunit from Mycobacterium bovis (strain ATCC BAA-935 / AF2122/97).